A 249-amino-acid chain; its full sequence is Protein twisted gastrulation (249 aa).

The signal sequence occupies residues 1–23; that stretch reads MQLLCYFVILFVGIAPWSSLAND. Asparagine 199 is a glycosylation site (N-linked (GlcNAc...) asparagine).

This sequence belongs to the twisted gastrulation protein family. As to quaternary structure, component of a complex composed of dpp, sog and tsg. As to expression, first appears in stage 4 embryos, expressed in two domains: a broad mid-dorsal saddle and an anterior cap, expression between the domains is continuous across the dorsal midline. At stage 5, expression is refined into 4 graded stripes in the mid-dorsal region and a paired domain in the anterior region. During stages 7 and 8, anterior expression fades and the mid dorsal stripes are located between the anterior and posterior transverse furrow (ATF and PTF). Expressing cells become incorporated into the deepening PTF.

It localises to the secreted. Involved in dorsal-ventral patterning. Required for specification of a narrow strip of dorsal midline cells that will give rise to the amnioserosa, but not for specification of dorsal ectoderm cells. Inhibits BMP signaling; enhances the binding of sog to dpp, thus enhancing the antagonistic activity of sog. The chain is Protein twisted gastrulation (tsg) from Drosophila melanogaster (Fruit fly).